The chain runs to 185 residues: uncharacterized protein (185 aa).

This is an uncharacterized protein from Bacillus subtilis (strain 168).